Reading from the N-terminus, the 120-residue chain is Large ribosomal subunit protein uL18 (120 aa).

Part of the 50S ribosomal subunit; part of the 5S rRNA/L5/L18/L25 subcomplex. Contacts the 5S and 23S rRNAs.

In terms of biological role, this is one of the proteins that bind and probably mediate the attachment of the 5S RNA into the large ribosomal subunit, where it forms part of the central protuberance. The chain is Large ribosomal subunit protein uL18 from Rhodopseudomonas palustris (strain ATCC BAA-98 / CGA009).